Reading from the N-terminus, the 120-residue chain is A-type ATP synthase subunit F (120 aa).

It belongs to the V-ATPase F subunit family. As to quaternary structure, has multiple subunits with at least A(3), B(3), C, D, E, F, H, I and proteolipid K(x).

It localises to the cell membrane. Component of the A-type ATP synthase that produces ATP from ADP in the presence of a proton gradient across the membrane. The protein is A-type ATP synthase subunit F of Halobacterium salinarum (strain ATCC 29341 / DSM 671 / R1).